Here is a 261-residue protein sequence, read N- to C-terminus: Cytochrome c oxidase subunit 3 (261 aa).

Residues 1 to 15 (MTRQTHAYHMVNPSP) are Mitochondrial matrix-facing. Residues 16–34 (WPLTGALSALLMTSGLIMW) form a helical membrane-spanning segment. Topologically, residues 35 to 40 (FHFNST) are mitochondrial intermembrane. Residues 41–66 (ILLMLGLTTNMLTMYQWWRDVIREST) traverse the membrane as a helical segment. Over 67–72 (FQGHHT) the chain is Mitochondrial matrix. A helical transmembrane segment spans residues 73-105 (PNVQKGLRYGMILFIISEVLFFTGFFWAFYHSS). Residues 106 to 128 (LAPTPELGGCWPPTGIHPLNPLE) are Mitochondrial intermembrane-facing. A helical transmembrane segment spans residues 129 to 152 (VPLLNTSVLLASGVSITWAHHSLM). Over 153-155 (EGN) the chain is Mitochondrial matrix. A helical transmembrane segment spans residues 156–183 (RNHMLQALFITIALGVYFTLLQASEYYE). The Mitochondrial intermembrane segment spans residues 184 to 190 (APFTISD). A helical transmembrane segment spans residues 191–223 (GVYGSTFFVATGFHGLHVIIGSTFLIVCFFRQL). Over 224–232 (KFHFTSNHH) the chain is Mitochondrial matrix. The chain crosses the membrane as a helical span at residues 233 to 256 (FGFEAAAWYWHFVDVVWLFLYVSI). The Mitochondrial intermembrane segment spans residues 257 to 261 (YWWGS).

This sequence belongs to the cytochrome c oxidase subunit 3 family. In terms of assembly, component of the cytochrome c oxidase (complex IV, CIV), a multisubunit enzyme composed of 14 subunits. The complex is composed of a catalytic core of 3 subunits MT-CO1, MT-CO2 and MT-CO3, encoded in the mitochondrial DNA, and 11 supernumerary subunits COX4I, COX5A, COX5B, COX6A, COX6B, COX6C, COX7A, COX7B, COX7C, COX8 and NDUFA4, which are encoded in the nuclear genome. The complex exists as a monomer or a dimer and forms supercomplexes (SCs) in the inner mitochondrial membrane with NADH-ubiquinone oxidoreductase (complex I, CI) and ubiquinol-cytochrome c oxidoreductase (cytochrome b-c1 complex, complex III, CIII), resulting in different assemblies (supercomplex SCI(1)III(2)IV(1) and megacomplex MCI(2)III(2)IV(2)).

It is found in the mitochondrion inner membrane. The enzyme catalyses 4 Fe(II)-[cytochrome c] + O2 + 8 H(+)(in) = 4 Fe(III)-[cytochrome c] + 2 H2O + 4 H(+)(out). Component of the cytochrome c oxidase, the last enzyme in the mitochondrial electron transport chain which drives oxidative phosphorylation. The respiratory chain contains 3 multisubunit complexes succinate dehydrogenase (complex II, CII), ubiquinol-cytochrome c oxidoreductase (cytochrome b-c1 complex, complex III, CIII) and cytochrome c oxidase (complex IV, CIV), that cooperate to transfer electrons derived from NADH and succinate to molecular oxygen, creating an electrochemical gradient over the inner membrane that drives transmembrane transport and the ATP synthase. Cytochrome c oxidase is the component of the respiratory chain that catalyzes the reduction of oxygen to water. Electrons originating from reduced cytochrome c in the intermembrane space (IMS) are transferred via the dinuclear copper A center (CU(A)) of subunit 2 and heme A of subunit 1 to the active site in subunit 1, a binuclear center (BNC) formed by heme A3 and copper B (CU(B)). The BNC reduces molecular oxygen to 2 water molecules using 4 electrons from cytochrome c in the IMS and 4 protons from the mitochondrial matrix. The chain is Cytochrome c oxidase subunit 3 (MT-CO3) from Eudorcas rufifrons (Red-fronted gazelle).